The sequence spans 599 residues: Elongation factor 4 (599 aa).

In terms of domain architecture, tr-type G spans 2–185; it reads ENIRNFSIIA…AITKRIPPPK (184 aa). Residues 14–19 and 132–135 each bind GTP; these read DHGKST and NKID.

It belongs to the TRAFAC class translation factor GTPase superfamily. Classic translation factor GTPase family. LepA subfamily.

It localises to the cell inner membrane. The catalysed reaction is GTP + H2O = GDP + phosphate + H(+). Functionally, required for accurate and efficient protein synthesis under certain stress conditions. May act as a fidelity factor of the translation reaction, by catalyzing a one-codon backward translocation of tRNAs on improperly translocated ribosomes. Back-translocation proceeds from a post-translocation (POST) complex to a pre-translocation (PRE) complex, thus giving elongation factor G a second chance to translocate the tRNAs correctly. Binds to ribosomes in a GTP-dependent manner. The chain is Elongation factor 4 from Hydrogenobaculum sp. (strain Y04AAS1).